The sequence spans 231 residues: Pathogenesis-related thaumatin-like protein 3.7 (231 aa).

The N-terminal stretch at 1 to 27 (MATVSDLALLLVAGLVAISLHMQEAGA) is a signal peptide. Cystine bridges form between Cys36–Cys230, Cys77–Cys87, Cys92–Cys98, Cys143–Cys218, Cys148–Cys201, Cys156–Cys166, Cys170–Cys179, and Cys180–Cys188.

It belongs to the thaumatin family.

In terms of biological role, may be involved in disease resistance. The protein is Pathogenesis-related thaumatin-like protein 3.7 of Cryptomeria japonica (Japanese cedar).